The sequence spans 106 residues: MKKVVFFLLDFYRYGLSSFRQTLGMYGVCRYYPTCSQYCREAVQKHGIIHGLYLCLRRLMRCHPWGAAGWDPVPEKSNLGIKRTKKADHPLKKKVSLMRVMHLFFK.

The protein belongs to the UPF0161 family.

The protein resides in the cell inner membrane. In terms of biological role, could be involved in insertion of integral membrane proteins into the membrane. The polypeptide is Putative membrane protein insertion efficiency factor (Methylacidiphilum infernorum (isolate V4) (Methylokorus infernorum (strain V4))).